The sequence spans 59 residues: Large ribosomal subunit protein bL32c (59 aa).

Residues 37 to 59 form a disordered region; that stretch reads SRSFSSGNEHPKPKGFSGQQTNK.

It belongs to the bacterial ribosomal protein bL32 family.

Its subcellular location is the plastid. It localises to the chloroplast. This is Large ribosomal subunit protein bL32c from Hordeum vulgare (Barley).